The primary structure comprises 172 residues: Large ribosomal subunit protein uL10 (172 aa).

Belongs to the universal ribosomal protein uL10 family. In terms of assembly, part of the ribosomal stalk of the 50S ribosomal subunit. The N-terminus interacts with L11 and the large rRNA to form the base of the stalk. The C-terminus forms an elongated spine to which L12 dimers bind in a sequential fashion forming a multimeric L10(L12)X complex.

In terms of biological role, forms part of the ribosomal stalk, playing a central role in the interaction of the ribosome with GTP-bound translation factors. In Rhizobium rhizogenes (strain K84 / ATCC BAA-868) (Agrobacterium radiobacter), this protein is Large ribosomal subunit protein uL10.